Consider the following 378-residue polypeptide: Alginate lyase (378 aa).

Residues 1-28 form the signal peptide; the sequence is MQTPKLIRPTLLSMAILSSMAWATGASA. Residues 67-68, 140-141, and Tyr258 contribute to the substrate site; these read SK and HT. Residues 359–378 are disordered; it reads LTKVYDPSHEKGDKGDNDGS. The span at 364-378 shows a compositional bias: basic and acidic residues; that stretch reads DPSHEKGDKGDNDGS.

Belongs to the polysaccharide lyase 5 family.

The protein localises to the periplasm. The catalysed reaction is Eliminative cleavage of alginate to give oligosaccharides with 4-deoxy-alpha-L-erythro-hex-4-enuronosyl groups at their non-reducing ends and beta-D-mannuronate at their reducing end.. Functionally, catalyzes the depolymerization of alginate by cleaving the beta-1,4 glycosidic bond between two adjacent sugar residues via a beta-elimination mechanism. May serve to degrade mislocalized alginate that is trapped in the periplasmic space. The polypeptide is Alginate lyase (Pseudomonas syringae pv. syringae (strain B728a)).